Here is a 503-residue protein sequence, read N- to C-terminus: UDP-N-acetylmuramate--L-alanine ligase (503 aa).

Residues 1 to 22 (MIKQTHVSNSSNNSTNSTAAQV) form a disordered region. Positions 8–18 (SNSSNNSTNST) are enriched in low complexity. 135 to 141 (GTHGKTT) contributes to the ATP binding site.

The protein belongs to the MurCDEF family.

The protein resides in the cytoplasm. The enzyme catalyses UDP-N-acetyl-alpha-D-muramate + L-alanine + ATP = UDP-N-acetyl-alpha-D-muramoyl-L-alanine + ADP + phosphate + H(+). The protein operates within cell wall biogenesis; peptidoglycan biosynthesis. Cell wall formation. In Colwellia psychrerythraea (strain 34H / ATCC BAA-681) (Vibrio psychroerythus), this protein is UDP-N-acetylmuramate--L-alanine ligase.